Reading from the N-terminus, the 136-residue chain is Small ribosomal subunit protein uS11c (136 aa).

This sequence belongs to the universal ribosomal protein uS11 family. In terms of assembly, part of the 30S ribosomal subunit.

It localises to the plastid. This chain is Small ribosomal subunit protein uS11c, found in Epifagus virginiana (Beechdrops).